Reading from the N-terminus, the 337-residue chain is Ketol-acid reductoisomerase (NADP(+)) (337 aa).

The KARI N-terminal Rossmann domain maps to 3–183; sequence IELFYDADAD…GGGRAGIIPT (181 aa). Residues 26–29, R49, S52, S54, and 84–87 each bind NADP(+); these read YGSQ and DTSQ. The active site involves H109. G135 serves as a coordination point for NADP(+). Positions 184 to 329 constitute a KARI C-terminal knotted domain; the sequence is TFEAETVTDL…AKLRDLMSWV (146 aa). Positions 192, 196, 228, and 232 each coordinate Mg(2+). S253 lines the substrate pocket.

Belongs to the ketol-acid reductoisomerase family. Requires Mg(2+) as cofactor.

It carries out the reaction (2R)-2,3-dihydroxy-3-methylbutanoate + NADP(+) = (2S)-2-acetolactate + NADPH + H(+). It catalyses the reaction (2R,3R)-2,3-dihydroxy-3-methylpentanoate + NADP(+) = (S)-2-ethyl-2-hydroxy-3-oxobutanoate + NADPH + H(+). It functions in the pathway amino-acid biosynthesis; L-isoleucine biosynthesis; L-isoleucine from 2-oxobutanoate: step 2/4. The protein operates within amino-acid biosynthesis; L-valine biosynthesis; L-valine from pyruvate: step 2/4. In terms of biological role, involved in the biosynthesis of branched-chain amino acids (BCAA). Catalyzes an alkyl-migration followed by a ketol-acid reduction of (S)-2-acetolactate (S2AL) to yield (R)-2,3-dihydroxy-isovalerate. In the isomerase reaction, S2AL is rearranged via a Mg-dependent methyl migration to produce 3-hydroxy-3-methyl-2-ketobutyrate (HMKB). In the reductase reaction, this 2-ketoacid undergoes a metal-dependent reduction by NADPH to yield (R)-2,3-dihydroxy-isovalerate. The protein is Ketol-acid reductoisomerase (NADP(+)) of Corynebacterium efficiens (strain DSM 44549 / YS-314 / AJ 12310 / JCM 11189 / NBRC 100395).